Consider the following 98-residue polypeptide: ESAT-6-like protein EsxK (98 aa).

This sequence belongs to the WXG100 family. CFP-10 subfamily. In terms of assembly, strongly interacts with EsxL to form a heterodimeric complex under reducing conditions.

It is found in the secreted. This Mycobacterium tuberculosis (strain CDC 1551 / Oshkosh) protein is ESAT-6-like protein EsxK.